The chain runs to 153 residues: Glutamyl-tRNA(Gln) amidotransferase subunit C, mitochondrial (153 aa).

Residues His-31–Pro-55 are disordered.

Belongs to the GatC family. In terms of assembly, subunit of the heterotrimeric GatCAB amidotransferase (AdT) complex, composed of A, B and C subunits.

It localises to the mitochondrion. It carries out the reaction L-glutamyl-tRNA(Gln) + L-glutamine + ATP + H2O = L-glutaminyl-tRNA(Gln) + L-glutamate + ADP + phosphate + H(+). Its function is as follows. Allows the formation of correctly charged Gln-tRNA(Gln) through the transamidation of misacylated Glu-tRNA(Gln) in the mitochondria. The reaction takes place in the presence of glutamine and ATP through an activated gamma-phospho-Glu-tRNA(Gln). This chain is Glutamyl-tRNA(Gln) amidotransferase subunit C, mitochondrial, found in Drosophila willistoni (Fruit fly).